We begin with the raw amino-acid sequence, 346 residues long: Ion-translocating oxidoreductase complex subunit D (346 aa).

4 helical membrane-spanning segments follow: residues 20–40 (IMIQ…TFFG), 42–62 (GIII…GVVL), 69–91 (LASR…SLPP), and 120–140 (PFNP…VQMT). Threonine 187 carries the FMN phosphoryl threonine modification. 5 helical membrane passes run 212-232 (ASAG…YLIW), 242-262 (LSLL…APVV), 264-284 (APPL…FIAT), 290-310 (AATV…VWLI), and 314-334 (GGYP…VPLI).

It belongs to the NqrB/RnfD family. In terms of assembly, the complex is composed of six subunits: RnfA, RnfB, RnfC, RnfD, RnfE and RnfG. It depends on FMN as a cofactor.

It localises to the cell inner membrane. Functionally, part of a membrane-bound complex that couples electron transfer with translocation of ions across the membrane. In Sodalis glossinidius (strain morsitans), this protein is Ion-translocating oxidoreductase complex subunit D.